The chain runs to 187 residues: Meiotically up-regulated protein C1442.13c (187 aa).

2 disordered regions span residues 15–46 (QWEN…LSNE) and 119–145 (IQEG…PAIN). Over residues 26-41 (PPRKPKIVQPKKKPSK) the composition is skewed to basic residues. One can recognise a G-patch domain in the interval 145-187 (NNGKGKQLLEMMGWSRGKGLGSENQGMVDPVVAVVKNNKQGLH).

It localises to the nucleus. Its subcellular location is the cytoplasm. The protein resides in the cytoskeleton. It is found in the microtubule organizing center. The protein localises to the spindle pole body. Its function is as follows. Has a role in meiosis and sporulation. Required for meiotic chromosome segregation. The chain is Meiotically up-regulated protein C1442.13c from Schizosaccharomyces pombe (strain 972 / ATCC 24843) (Fission yeast).